The sequence spans 137 residues: Proofreading thioesterase EntH (137 aa).

The active-site Nucleophile or proton acceptor is E63.

Belongs to the thioesterase PaaI family. In terms of assembly, homotetramer. Dimer of dimers. Interacts specifically with the aryl carrier protein (ArCP) domain of EntB.

The protein localises to the cytoplasm. The protein operates within siderophore biosynthesis; enterobactin biosynthesis. Functionally, required for optimal enterobactin synthesis. Acts as a proofreading enzyme that prevents EntB misacylation by hydrolyzing the thioester bound existing between EntB and wrongly charged molecules. This chain is Proofreading thioesterase EntH, found in Salmonella paratyphi B (strain ATCC BAA-1250 / SPB7).